The chain runs to 596 residues: UvrABC system protein C (596 aa).

One can recognise a GIY-YIG domain in the interval 16–95; it reads SSPGVYRFYS…IKENKPKYNV (80 aa). The region spanning 209-244 is the UVR domain; the sequence is SSVKKYYQEKMLSAAEDMQFEKAQFFKERYNSVLGL.

It belongs to the UvrC family. As to quaternary structure, interacts with UvrB in an incision complex.

It is found in the cytoplasm. The UvrABC repair system catalyzes the recognition and processing of DNA lesions. UvrC both incises the 5' and 3' sides of the lesion. The N-terminal half is responsible for the 3' incision and the C-terminal half is responsible for the 5' incision. The chain is UvrABC system protein C from Cytophaga hutchinsonii (strain ATCC 33406 / DSM 1761 / CIP 103989 / NBRC 15051 / NCIMB 9469 / D465).